The primary structure comprises 371 residues: Probable beta-1,3-galactosyltransferase 12 (371 aa).

The tract at residues 1–36 (MPLFSHRFTTASSSSPASPSYYNKPSSKTHKPNSSS) is disordered. The segment covering 11-36 (ASSSSPASPSYYNKPSSKTHKPNSSS) has biased composition (low complexity). Residues 46 to 66 (VAIIFFSLVSVFIGVAGTIFA) traverse the membrane as a helical; Signal-anchor for type II membrane protein segment. A glycan (N-linked (GlcNAc...) asparagine) is linked at Asn-291.

This sequence belongs to the glycosyltransferase 31 family. Mn(2+) serves as cofactor.

The protein localises to the golgi apparatus membrane. The protein operates within protein modification; protein glycosylation. Its function is as follows. Beta-1,3-galactosyltransferase that transfers galactose from UDP-galactose to substrates with a terminal glycosyl residue. In Arabidopsis thaliana (Mouse-ear cress), this protein is Probable beta-1,3-galactosyltransferase 12 (B3GALT12).